Consider the following 906-residue polypeptide: Cadherin-2 (906 aa).

The signal sequence occupies residues M1 to A25. A propeptide spanning residues S26–R159 is cleaved from the precursor. Phosphoserine occurs at positions 96 and 135. 5 Cadherin domains span residues D160–F267, L268–F382, T383–F497, A498–P603, and Q604–R714. The Extracellular portion of the chain corresponds to D160 to A724. E170 provides a ligand contact to Ca(2+). Residue N190 is glycosylated (N-linked (GlcNAc...) asparagine). Ca(2+) is bound by residues D226, E228, D259, M260, N261, D262, and N263. An N-linked (GlcNAc...) asparagine glycan is attached at N273. Ca(2+) is bound by residues D293, D295, and N301. N-linked (GlcNAc...) asparagine glycosylation occurs at N325. D353 is a Ca(2+) binding site. Residues N402, N572, N622, N651, and N692 are each glycosylated (N-linked (GlcNAc...) asparagine). A helical membrane pass occupies residues I725–W745. Residues M746–D906 are Cytoplasmic-facing. The span at S863–G880 shows a compositional bias: low complexity. The disordered stretch occupies residues S863–Y884.

As to quaternary structure, homodimer (via extracellular region). Can also form heterodimers with other cadherins (via extracellular region). Dimerization occurs in trans, i.e. with a cadherin chain from another cell. Interacts with CDCP1. Interacts with PCDH8; this complex may also include TAOK2. The interaction with PCDH8 may lead to internalization through TAOK2/p38 MAPK pathway. Identified in a complex containing FGFR4, NCAM1, CDH2, PLCG1, FRS2, SRC, SHC1, GAP43 and CTTN. May interact with OBSCN (via protein kinase domain 2). Interacts with FBXO45. In terms of processing, cleaved by MMP24. Ectodomain cleavage leads to the generation of a soluble 90 kDa N-terminal soluble fragment and a 45 kDa membrane-bound C-terminal fragment 1 (CTF1), which is further cleaved by gamma-secretase into a 35 kDa. Cleavage in neural stem cells by MMP24 affects CDH2-mediated anchorage of neural stem cells to ependymocytes in the adult subependymal zone, leading to modulate neural stem cell quiescence.

Its subcellular location is the cell membrane. It is found in the sarcolemma. The protein localises to the cell junction. The protein resides in the cell surface. It localises to the desmosome. Its subcellular location is the adherens junction. Its function is as follows. Calcium-dependent cell adhesion protein; preferentially mediates homotypic cell-cell adhesion by dimerization with a CDH2 chain from another cell. Cadherins may thus contribute to the sorting of heterogeneous cell types. Acts as a regulator of neural stem cells quiescence by mediating anchorage of neural stem cells to ependymocytes in the adult subependymal zone: upon cleavage by MMP24, CDH2-mediated anchorage is affected, leading to modulate neural stem cell quiescence. Plays a role in cell-to-cell junction formation between pancreatic beta cells and neural crest stem (NCS) cells, promoting the formation of processes by NCS cells. Required for proper neurite branching. Required for pre- and postsynaptic organization. CDH2 may be involved in neuronal recognition mechanism. In hippocampal neurons, may regulate dendritic spine density. In Callithrix jacchus (White-tufted-ear marmoset), this protein is Cadherin-2 (CDH2).